The sequence spans 890 residues: Protein Ycf2 (890 aa).

G385–T392 contacts ATP.

The protein belongs to the Ycf2 family.

The protein resides in the plastid. It is found in the chloroplast stroma. Functionally, probable ATPase of unknown function. Its presence in a non-photosynthetic plant (Epifagus virginiana) and experiments in tobacco indicate that it has an essential function which is probably not related to photosynthesis. This Mesostigma viride (Green alga) protein is Protein Ycf2 (ycf2).